Here is a 217-residue protein sequence, read N- to C-terminus: MQLLMLEQISLASSVVATTVLVAPVLSTIINLLTNFGQRIFIAADSSKSTSMEFLSTIIGAGYPIYKTYLLLELPSKRSQLLPKAFQLRNEEHKSIEEERRRLMAYWCVYGCVTAAESILGRFLSWVPFYSTSKIVFWLWLLNPRTQGAAFIYASYISPFLSDHKAAINNFLEKLVQFTTRQPLVLNAWALVKSLIDKLPKGDVEAPGSDADTKKSK.

The next 4 membrane-spanning stretches (helical) occupy residues 9–29, 54–74, 103–125, and 135–157; these read ISLASSVVATTVLVAPVLSTI, FLSTIIGAGYPIYKTYLLLEL, LMAYWCVYGCVTAAESILGRFLS, and IVFWLWLLNPRTQGAAFIYASYI.

It belongs to the DP1 family.

The protein localises to the endoplasmic reticulum membrane. This is an uncharacterized protein from Schizosaccharomyces pombe (strain 972 / ATCC 24843) (Fission yeast).